A 422-amino-acid chain; its full sequence is Dihydroorotase (422 aa).

2 residues coordinate Zn(2+): His61 and His63. Substrate-binding positions include 63–65 and Asn95; that span reads HLR. Zn(2+) is bound at residue Asp153. Asn278 is a substrate binding site. Asp305 is a Zn(2+) binding site. Residue Asp305 is part of the active site. Substrate contacts are provided by residues His309 and 322 to 323; that span reads PG.

This sequence belongs to the metallo-dependent hydrolases superfamily. DHOase family. Class I DHOase subfamily. Monomer. Forms a 1:1 stoichiometric complex with PyrB. The complex exists as an equilibrium mixture of heterohexamers, composed of 3 PyrC and 3 PyrB subunits, and dodecamers. The complex has both DHOase and ATCase activities. It depends on Zn(2+) as a cofactor.

The enzyme catalyses (S)-dihydroorotate + H2O = N-carbamoyl-L-aspartate + H(+). It functions in the pathway pyrimidine metabolism; UMP biosynthesis via de novo pathway; (S)-dihydroorotate from bicarbonate: step 3/3. Its activity is regulated as follows. The monomer has very low activity by itself. Activated several thousandfold by formation of a complex with PyrB aspartate carbamoyltransferase (ATCase). Its function is as follows. Catalyzes the reversible cyclization of carbamoyl aspartate to dihydroorotate. The sequence is that of Dihydroorotase from Aquifex aeolicus (strain VF5).